The chain runs to 904 residues: Phosphoenolpyruvate carboxylase (904 aa).

Catalysis depends on residues H151 and K570.

The protein belongs to the PEPCase type 1 family. Mg(2+) serves as cofactor.

It catalyses the reaction oxaloacetate + phosphate = phosphoenolpyruvate + hydrogencarbonate. In terms of biological role, forms oxaloacetate, a four-carbon dicarboxylic acid source for the tricarboxylic acid cycle. The chain is Phosphoenolpyruvate carboxylase from Xanthomonas campestris pv. campestris (strain 8004).